The primary structure comprises 473 residues: Glycine--tRNA ligase (473 aa).

Substrate is bound by residues Arg101 and Glu172. ATP-binding positions include 204–206 (RNE), 214–219 (FRTREF), 289–290 (EL), and 333–336 (GVER). 219-223 (FEQME) is a binding site for substrate. Position 329-333 (329-333 (EPSVG)) interacts with substrate.

The protein belongs to the class-II aminoacyl-tRNA synthetase family. In terms of assembly, homodimer.

Its subcellular location is the cytoplasm. The enzyme catalyses tRNA(Gly) + glycine + ATP = glycyl-tRNA(Gly) + AMP + diphosphate. In terms of biological role, catalyzes the attachment of glycine to tRNA(Gly). The polypeptide is Glycine--tRNA ligase (Ureaplasma urealyticum serovar 10 (strain ATCC 33699 / Western)).